The chain runs to 135 residues: UPF0102 protein Mjls_1965 (135 aa).

It belongs to the UPF0102 family.

This is UPF0102 protein Mjls_1965 from Mycobacterium sp. (strain JLS).